We begin with the raw amino-acid sequence, 641 residues long: uncharacterized protein (641 aa).

A Phosphoserine modification is found at serine 112. 4 disordered regions span residues 118-243 (STSI…LDPT), 261-289 (KSPR…TVSI), 355-386 (DKSD…RLEA), and 404-430 (DGEG…QSHS). Polar residues predominate over residues 132–162 (ASVSSQYPHRTFQKQVNKTCVSKSDGPSGNG). Residue serine 198 is modified to Phosphoserine. 2 stretches are compositionally biased toward polar residues: residues 222–234 (NQEL…SRSN) and 278–289 (RQASSAGDTVSI). Basic and acidic residues predominate over residues 355-368 (DKSDGDQREEDCVR). 2 stretches are compositionally biased toward low complexity: residues 374–383 (RSSSPTSPTR) and 421–430 (SSSAAVQSHS).

This is an uncharacterized protein from Mus musculus (Mouse).